The sequence spans 280 residues: Secreted RxLR effector protein 39 (280 aa).

Residues 1–19 (MRGAYYVAIALLIVASCSA) form the signal peptide. Positions 49–70 (RVLRGSRDLKNKWAVHAGGEDR) match the RxLR-dEER motif. The interval 229-249 (EVKARSSKRQRTNPMLNNMDG) is disordered.

This sequence belongs to the RxLR effector family.

The protein resides in the secreted. The protein localises to the host nucleus. Functionally, secreted effector that completely suppresses the host cell death induced by cell death-inducing proteins. This is Secreted RxLR effector protein 39 from Plasmopara viticola (Downy mildew of grapevine).